The chain runs to 252 residues: NADH-quinone oxidoreductase subunit E (252 aa).

4 residues coordinate [2Fe-2S] cluster: cysteine 114, cysteine 119, cysteine 155, and cysteine 159. The disordered stretch occupies residues 211-252; the sequence is LAGLPDQRPDEGQGGPGAPTLAGLQVARKNDMQAPPTPGADE.

This sequence belongs to the complex I 24 kDa subunit family. It depends on [2Fe-2S] cluster as a cofactor.

The enzyme catalyses a quinone + NADH + 5 H(+)(in) = a quinol + NAD(+) + 4 H(+)(out). Functionally, NDH-1 shuttles electrons from NADH, via FMN and iron-sulfur (Fe-S) centers, to quinones in the respiratory chain. The immediate electron acceptor for the enzyme in this species is believed to be menaquinone. Couples the redox reaction to proton translocation (for every two electrons transferred, four hydrogen ions are translocated across the cytoplasmic membrane), and thus conserves the redox energy in a proton gradient. The polypeptide is NADH-quinone oxidoreductase subunit E (nuoE) (Mycobacterium bovis (strain ATCC BAA-935 / AF2122/97)).